A 94-amino-acid polypeptide reads, in one-letter code: Co-chaperonin GroES (94 aa).

Belongs to the GroES chaperonin family. As to quaternary structure, heptamer of 7 subunits arranged in a ring. Interacts with the chaperonin GroEL.

Its subcellular location is the cytoplasm. Functionally, together with the chaperonin GroEL, plays an essential role in assisting protein folding. The GroEL-GroES system forms a nano-cage that allows encapsulation of the non-native substrate proteins and provides a physical environment optimized to promote and accelerate protein folding. GroES binds to the apical surface of the GroEL ring, thereby capping the opening of the GroEL channel. The protein is Co-chaperonin GroES of Ligilactobacillus salivarius (strain UCC118) (Lactobacillus salivarius).